The sequence spans 249 residues: Ditrans,polycis-undecaprenyl-diphosphate synthase ((2E,6E)-farnesyl-diphosphate specific) (249 aa).

The active site involves Asp-29. Asp-29 lines the Mg(2+) pocket. Residues 30 to 33, Trp-34, Arg-42, His-46, and 74 to 76 contribute to the substrate site; these read GNGR and STE. The Proton acceptor role is filled by Asn-77. Substrate-binding positions include Trp-78, Arg-80, Arg-197, and 203–205; that span reads RLS. Glu-216 is a binding site for Mg(2+).

Belongs to the UPP synthase family. Homodimer. Mg(2+) serves as cofactor.

The catalysed reaction is 8 isopentenyl diphosphate + (2E,6E)-farnesyl diphosphate = di-trans,octa-cis-undecaprenyl diphosphate + 8 diphosphate. Functionally, generates ditrans,octacis-undecaprenyl pyrophosphate (UPP) from isopentenyl pyrophosphate (IPP) and farnesyl diphosphate. UPP is the precursor of glycosyl carrier lipid in the biosynthesis of bacterial cell wall polysaccharide components such as peptidoglycan and lipopolysaccharide. This chain is Ditrans,polycis-undecaprenyl-diphosphate synthase ((2E,6E)-farnesyl-diphosphate specific) (uppS), found in Micrococcus luteus (Micrococcus lysodeikticus).